Reading from the N-terminus, the 657-residue chain is N-acetylgalactosaminyltransferase 7 (657 aa).

Residues 1–6 (MRLKIG) are Cytoplasmic-facing. Residues 7–29 (FILRSLLVVGSFLGLVVLWSSLS) form a helical; Signal-anchor for type II membrane protein membrane-spanning segment. Disordered stretches follow at residues 30-66 (SRPDDQSPLSRMREDRDVNNPLPNRGGNGLAPGDDRF) and 83-105 (ESIRRKNKAKNEQERHAGGDSQR). The Lumenal segment spans residues 30-657 (SRPDDQSPLS…KWEMNNIHSV (628 aa)). Disulfide bonds link Cys-197–Cys-435, Cys-426–Cys-507, Cys-545–Cys-562, Cys-585–Cys-600, and Cys-625–Cys-640. The tract at residues 206 to 317 (LLTSSVVIVF…VNWYAPLVAP (112 aa)) is catalytic subdomain A. Substrate is bound by residues Asp-247 and Arg-277. 2 residues coordinate Mn(2+): Asp-301 and His-303. The tract at residues 381–443 (PYRSPAMAGG…PCSRVGHIYR (63 aa)) is catalytic subdomain B. Trp-412 is a substrate binding site. Residue His-440 participates in Mn(2+) binding. Substrate is bound at residue Arg-443. Positions 532–652 (VEWGEIRGLE…SKMTQKWEMN (121 aa)) constitute a Ricin B-type lectin domain.

The protein belongs to the glycosyltransferase 2 family. GalNAc-T subfamily. Mn(2+) is required as a cofactor. As to expression, highly expressed in sublingual gland. Expressed at lower level in stomach, small intestiine and colon.

The protein localises to the golgi apparatus membrane. The enzyme catalyses L-seryl-[protein] + UDP-N-acetyl-alpha-D-galactosamine = a 3-O-[N-acetyl-alpha-D-galactosaminyl]-L-seryl-[protein] + UDP + H(+). It catalyses the reaction L-threonyl-[protein] + UDP-N-acetyl-alpha-D-galactosamine = a 3-O-[N-acetyl-alpha-D-galactosaminyl]-L-threonyl-[protein] + UDP + H(+). The protein operates within protein modification; protein glycosylation. Its function is as follows. Glycopeptide transferase involved in O-linked oligosaccharide biosynthesis, which catalyzes the transfer of an N-acetyl-D-galactosamine residue to an already glycosylated peptide. In contrast to other proteins of the family, it does not act as a peptide transferase that transfers GalNAc onto serine or threonine residue on the protein receptor, but instead requires the prior addition of a GalNAc on a peptide before adding additional GalNAc moieties. Some peptide transferase activity is however not excluded, considering that its appropriate peptide substrate may remain unidentified. The chain is N-acetylgalactosaminyltransferase 7 (Galnt7) from Mus musculus (Mouse).